A 190-amino-acid polypeptide reads, in one-letter code: uncharacterized protein (190 aa).

This is an uncharacterized protein from Archaeoglobus fulgidus (strain ATCC 49558 / DSM 4304 / JCM 9628 / NBRC 100126 / VC-16).